The chain runs to 168 residues: Histone doublet miniH2B-H2A (168 aa).

The protein resides in the host nucleus. It localises to the host cytoplasm. Its subcellular location is the virion. In terms of biological role, histone-like protein that is recruited to viral factories during viral replication and participates in viral DNA packaging and virion production probably by forming unstable nucleosome-like particles. May compact the viral DNA. This chain is Histone doublet miniH2B-H2A, found in Melbournevirus (MelV).